The chain runs to 194 residues: Probable GTP-binding protein EngB (194 aa).

Residues 22 to 194 (DLPEFALAGR…KFWDWIEDKM (173 aa)) form the EngB-type G domain. Residues 30-37 (GRSNVGKS), 57-61 (GKTQT), 75-78 (DVPG), 142-145 (TKMD), and 175-177 (FSS) each bind GTP. Mg(2+)-binding residues include serine 37 and threonine 59.

The protein belongs to the TRAFAC class TrmE-Era-EngA-EngB-Septin-like GTPase superfamily. EngB GTPase family. It depends on Mg(2+) as a cofactor.

Necessary for normal cell division and for the maintenance of normal septation. In Lactobacillus gasseri (strain ATCC 33323 / DSM 20243 / BCRC 14619 / CIP 102991 / JCM 1131 / KCTC 3163 / NCIMB 11718 / NCTC 13722 / AM63), this protein is Probable GTP-binding protein EngB.